The following is a 116-amino-acid chain: Alpha-defensin 29 (116 aa).

Residues 1-19 (MKTLVLLSALVLPCFQVQA) form the signal peptide. Positions 20-60 (DPIQNTDEETKTEEQPEEEDQAVSVSFGGTEGSALQDVAQR) are excised as a propeptide. A disordered region spans residues 22–44 (IQNTDEETKTEEQPEEEDQAVSV). A run of 9 repeats spans residues 65 to 67 (CRK), 68 to 70 (CRV), 71 to 73 (CQK), 74 to 76 (CQV), 77 to 79 (CQK), 80 to 82 (CPV), 83 to 85 (CPT), 86 to 88 (CPQ), and 89 to 91 (CPK). Residues 65–70 (CRKCRV) form a 2 X 3 AA tandem repeats of C-R-X region. The segment at 71-79 (CQKCQVCQK) is 3 X 3 AA tandem repeats of C-Q-X. Positions 80–91 (CPVCPTCPQCPK) are 4 X 3 AA tandem repeats of C-P-X.

It belongs to the alpha-defensin family. Small bowel.

It is found in the secreted. Apparent precursor of a secreted, cationic, proline- and cysteine-rich peptide that contains Cys-Pro-Xaa repeats. Unlike cryptdin, the proposed mature peptide region lacks the structural motif characteristic of defensins. The sequence is that of Alpha-defensin 29 from Mus musculus (Mouse).